A 294-amino-acid polypeptide reads, in one-letter code: Cytidine deaminase (294 aa).

CMP/dCMP-type deaminase domains follow at residues 48-168 and 186-294; these read DEDA…FGPK and VSGD…VLLG. 89-91 lines the substrate pocket; sequence NME. Zn(2+) is bound at residue H102. Catalysis depends on E104, which acts as the Proton donor. C129 and C132 together coordinate Zn(2+).

This sequence belongs to the cytidine and deoxycytidylate deaminase family. Homodimer. Zn(2+) is required as a cofactor.

The catalysed reaction is cytidine + H2O + H(+) = uridine + NH4(+). It carries out the reaction 2'-deoxycytidine + H2O + H(+) = 2'-deoxyuridine + NH4(+). Functionally, this enzyme scavenges exogenous and endogenous cytidine and 2'-deoxycytidine for UMP synthesis. This chain is Cytidine deaminase, found in Klebsiella pneumoniae subsp. pneumoniae (strain ATCC 700721 / MGH 78578).